We begin with the raw amino-acid sequence, 486 residues long: Protein nucleotidyltransferase YdiU (486 aa).

ATP is bound by residues glycine 90, glycine 92, arginine 93, lysine 113, aspartate 125, glycine 126, arginine 176, and arginine 183. Aspartate 252 acts as the Proton acceptor in catalysis. Residues asparagine 253 and aspartate 262 each contribute to the Mg(2+) site. Aspartate 262 is an ATP binding site.

The protein belongs to the SELO family. Requires Mg(2+) as cofactor. Mn(2+) serves as cofactor.

It catalyses the reaction L-seryl-[protein] + ATP = 3-O-(5'-adenylyl)-L-seryl-[protein] + diphosphate. The enzyme catalyses L-threonyl-[protein] + ATP = 3-O-(5'-adenylyl)-L-threonyl-[protein] + diphosphate. It carries out the reaction L-tyrosyl-[protein] + ATP = O-(5'-adenylyl)-L-tyrosyl-[protein] + diphosphate. The catalysed reaction is L-histidyl-[protein] + UTP = N(tele)-(5'-uridylyl)-L-histidyl-[protein] + diphosphate. It catalyses the reaction L-seryl-[protein] + UTP = O-(5'-uridylyl)-L-seryl-[protein] + diphosphate. The enzyme catalyses L-tyrosyl-[protein] + UTP = O-(5'-uridylyl)-L-tyrosyl-[protein] + diphosphate. Nucleotidyltransferase involved in the post-translational modification of proteins. It can catalyze the addition of adenosine monophosphate (AMP) or uridine monophosphate (UMP) to a protein, resulting in modifications known as AMPylation and UMPylation. The polypeptide is Protein nucleotidyltransferase YdiU (Stutzerimonas stutzeri (strain A1501) (Pseudomonas stutzeri)).